A 337-amino-acid chain; its full sequence is Tetraacyldisaccharide 4'-kinase (337 aa).

Residue 51 to 58 participates in ATP binding; the sequence is HVGGAGKT.

The protein belongs to the LpxK family.

The catalysed reaction is a lipid A disaccharide + ATP = a lipid IVA + ADP + H(+). It functions in the pathway glycolipid biosynthesis; lipid IV(A) biosynthesis; lipid IV(A) from (3R)-3-hydroxytetradecanoyl-[acyl-carrier-protein] and UDP-N-acetyl-alpha-D-glucosamine: step 6/6. Transfers the gamma-phosphate of ATP to the 4'-position of a tetraacyldisaccharide 1-phosphate intermediate (termed DS-1-P) to form tetraacyldisaccharide 1,4'-bis-phosphate (lipid IVA). This Afipia carboxidovorans (strain ATCC 49405 / DSM 1227 / KCTC 32145 / OM5) (Oligotropha carboxidovorans) protein is Tetraacyldisaccharide 4'-kinase.